Here is a 180-residue protein sequence, read N- to C-terminus: Probable cobalt-precorrin-6B C(15)-methyltransferase (decarboxylating) (180 aa).

S-adenosyl-L-methionine is bound by residues Thr16, 40–44, Asp61, and Ala89; that span reads GCGSG.

This sequence belongs to the methyltransferase superfamily. Archaeal-type CbiT family.

The enzyme catalyses Co-precorrin-6B + S-adenosyl-L-methionine = Co-precorrin-7 + S-adenosyl-L-homocysteine + CO2. It functions in the pathway cofactor biosynthesis; adenosylcobalamin biosynthesis; cob(II)yrinate a,c-diamide from sirohydrochlorin (anaerobic route): step 8/10. In terms of biological role, catalyzes the methylation of C-15 in cobalt-precorrin-6B followed by the decarboxylation of C-12 to form cobalt-precorrin-7. In Methanococcus vannielii (strain ATCC 35089 / DSM 1224 / JCM 13029 / OCM 148 / SB), this protein is Probable cobalt-precorrin-6B C(15)-methyltransferase (decarboxylating).